Reading from the N-terminus, the 227-residue chain is Ribosomal RNA small subunit methyltransferase G (227 aa).

S-adenosyl-L-methionine is bound by residues G69, F74, 119–120 (VE), and R134.

The protein belongs to the methyltransferase superfamily. RNA methyltransferase RsmG family.

Its subcellular location is the cytoplasm. In terms of biological role, specifically methylates the N7 position of a guanine in 16S rRNA. The protein is Ribosomal RNA small subunit methyltransferase G of Mycoplasmopsis pulmonis (strain UAB CTIP) (Mycoplasma pulmonis).